A 196-amino-acid polypeptide reads, in one-letter code: Lipoprotein signal peptidase (196 aa).

Transmembrane regions (helical) follow at residues 43–63, 75–95, and 97–117; these read LMLKVTSILNMVYTWNYGISF, AIFLITNMIIVCYLYHLMICS, and TIGSFVGYNFVIGGAIGNLID. Active-site residues include D126 and D144. A helical transmembrane segment spans residues 135–155; sequence YSFPVFNLADCFITLGVIILI.

It belongs to the peptidase A8 family.

It localises to the cell inner membrane. The enzyme catalyses Release of signal peptides from bacterial membrane prolipoproteins. Hydrolyzes -Xaa-Yaa-Zaa-|-(S,diacylglyceryl)Cys-, in which Xaa is hydrophobic (preferably Leu), and Yaa (Ala or Ser) and Zaa (Gly or Ala) have small, neutral side chains.. It functions in the pathway protein modification; lipoprotein biosynthesis (signal peptide cleavage). Its function is as follows. This protein specifically catalyzes the removal of signal peptides from prolipoproteins. The sequence is that of Lipoprotein signal peptidase from Rickettsia typhi (strain ATCC VR-144 / Wilmington).